A 175-amino-acid polypeptide reads, in one-letter code: Two-on-two hemoglobin-3 (175 aa).

Tyr-85 and His-98 together coordinate heme. Residues 153–175 are disordered; that stretch reads QNEKPKHKPQCACKHAANKPAEE.

The protein belongs to the truncated hemoglobin family. Group II subfamily. As to quaternary structure, homodimer when ferric. Interacts with RGLG3 and RGLG4. Requires heme as cofactor. Expressed ubiquitously, with higher levels in root tissue than in shoot tissue.

Hemoglobin-like protein that exhibits an unusual concentration-independent binding of O(2) and CO. May promote shoot organogenesis from root explants in vitro. Inhibits RGLG3 and RGLG4 ubiquitination activity. This is Two-on-two hemoglobin-3 (GLB3) from Arabidopsis thaliana (Mouse-ear cress).